A 629-amino-acid chain; its full sequence is Translation initiation factor IF-2 (629 aa).

The tract at residues 1–20 (MAKNIKTNKKPQQVNKKEMS) is disordered. The tr-type G domain maps to 127-297 (HRAPIVTIMG…LLIAEMQDYK (171 aa)). Residues 136–143 (GHVDHGKT) are G1. 136–143 (GHVDHGKT) lines the GTP pocket. Residues 161-165 (GITQA) are G2. The segment at 183–186 (DTPG) is G3. Residues 183-187 (DTPGH) and 237-240 (NKCD) each bind GTP. The interval 237 to 240 (NKCD) is G4. Positions 273-275 (SAK) are G5.

The protein belongs to the TRAFAC class translation factor GTPase superfamily. Classic translation factor GTPase family. IF-2 subfamily.

It localises to the cytoplasm. One of the essential components for the initiation of protein synthesis. Protects formylmethionyl-tRNA from spontaneous hydrolysis and promotes its binding to the 30S ribosomal subunits. Also involved in the hydrolysis of GTP during the formation of the 70S ribosomal complex. This is Translation initiation factor IF-2 from Mesoplasma florum (strain ATCC 33453 / NBRC 100688 / NCTC 11704 / L1) (Acholeplasma florum).